A 124-amino-acid polypeptide reads, in one-letter code: Urease subunit beta (124 aa).

This sequence belongs to the urease beta subunit family. As to quaternary structure, heterotrimer of UreA (gamma), UreB (beta) and UreC (alpha) subunits. Three heterotrimers associate to form the active enzyme.

It localises to the cytoplasm. It carries out the reaction urea + 2 H2O + H(+) = hydrogencarbonate + 2 NH4(+). Its pathway is nitrogen metabolism; urea degradation; CO(2) and NH(3) from urea (urease route): step 1/1. This is Urease subunit beta from Ureaplasma parvum serovar 3 (strain ATCC 27815 / 27 / NCTC 11736).